The sequence spans 408 residues: Imidazolonepropionase (408 aa).

Fe(3+)-binding residues include histidine 73 and histidine 75. Histidine 73 and histidine 75 together coordinate Zn(2+). The 4-imidazolone-5-propanoate site is built by arginine 82, tyrosine 145, and histidine 178. Residue tyrosine 145 participates in N-formimidoyl-L-glutamate binding. Residue histidine 243 coordinates Fe(3+). Position 243 (histidine 243) interacts with Zn(2+). A 4-imidazolone-5-propanoate-binding site is contributed by glutamine 246. Position 318 (aspartate 318) interacts with Fe(3+). Residue aspartate 318 coordinates Zn(2+). N-formimidoyl-L-glutamate contacts are provided by asparagine 320 and glycine 322. Serine 323 lines the 4-imidazolone-5-propanoate pocket.

Belongs to the metallo-dependent hydrolases superfamily. HutI family. The cofactor is Zn(2+). Requires Fe(3+) as cofactor.

The protein resides in the cytoplasm. The catalysed reaction is 4-imidazolone-5-propanoate + H2O = N-formimidoyl-L-glutamate. It functions in the pathway amino-acid degradation; L-histidine degradation into L-glutamate; N-formimidoyl-L-glutamate from L-histidine: step 3/3. Its function is as follows. Catalyzes the hydrolytic cleavage of the carbon-nitrogen bond in imidazolone-5-propanoate to yield N-formimidoyl-L-glutamate. It is the third step in the universal histidine degradation pathway. This is Imidazolonepropionase from Shewanella sp. (strain MR-4).